The following is an 865-amino-acid chain: Alanine--tRNA ligase (865 aa).

Zn(2+)-binding residues include histidine 554, histidine 558, cysteine 656, and histidine 660.

Belongs to the class-II aminoacyl-tRNA synthetase family. It depends on Zn(2+) as a cofactor.

The protein resides in the cytoplasm. The enzyme catalyses tRNA(Ala) + L-alanine + ATP = L-alanyl-tRNA(Ala) + AMP + diphosphate. Catalyzes the attachment of alanine to tRNA(Ala) in a two-step reaction: alanine is first activated by ATP to form Ala-AMP and then transferred to the acceptor end of tRNA(Ala). Also edits incorrectly charged Ser-tRNA(Ala) and Gly-tRNA(Ala) via its editing domain. This Francisella tularensis subsp. mediasiatica (strain FSC147) protein is Alanine--tRNA ligase.